Consider the following 979-residue polypeptide: Pro-apoptotic serine protease NMA111 (979 aa).

The segment at 1-20 (MTIMNEGKKRSHSSSSDDHL) is disordered. The serine protease stretch occupies residues 65–255 (VVSIHFAQVA…LPLDRILRAL (191 aa)). Catalysis depends on charge relay system residues histidine 103, aspartate 134, and serine 217. PDZ domains are found at residues 273–361 (WLLK…RGGT) and 750–836 (SILH…VRDG).

This sequence belongs to the peptidase S1C family.

It is found in the nucleus. In terms of biological role, nuclear serine protease which mediates apoptosis. The chain is Pro-apoptotic serine protease NMA111 (NMA111) from Candida glabrata (strain ATCC 2001 / BCRC 20586 / JCM 3761 / NBRC 0622 / NRRL Y-65 / CBS 138) (Yeast).